Consider the following 757-residue polypeptide: MQNWETTATTNYEQHNAWYNSMFAANIKQEPGHHLDGNSVASSPRQSPIPSTNHLEQFLKQQQQHQQQPMDTLCAMTPSPSQNDQNSLQHYDANLQQQLLQQQQYQQHFQAAQQQHHHHHHLMGGFNPLTPPGLPNPMQHFYGGNLRPSPQPTPTSASTIAPVAVATGSSEKLQALTPPMDVTPPKSPAKSSQSNIEPEKEHDQMSNSSEDMKYMAESEDDDTNIRMPIYNSHGKMKNYKCKTCGVVAITKVDFWAHTRTHMKPDKILQCPKCPFVTEFKHHLEYHIRKHKNQKPFQCDKCSYTCVNKSMLNSHRKSHSSVYQYRCADCDYATKYCHSFKLHLRKYGHKPGMVLDEDGTPNPSLVIDVYGTRRGPKSKNGGPIASGGSGSGSRKSNVAAVAPQQQQSQPAQPVATSHLSAALQGFPLVQSNSAPPAASPVLPLPASPAKSVASVEQTPSLPSPANLLPPLASLLQQNRNMAFFPYWNLNLQMLAAQQQAAVLAQLSPRMREQLQQQNQQQSDNEEEDQDDEYERKSVDSAMDLSQGTPVKEDEQQQQPQQPLAMNLKVEEEATPLMSSSNASRRKGRVLKLDTLLQLRSEAMTSPEQLKVPSTPMPTASSPIAGRKPMPEEHCSGTSSADESMERPHVRQANTSASSTASSSGNSSNASSNSNGNSSSNSSSNGTTSAVAAPPSGTPAAAGAIYECKYCDIFFKDAVLYTIHMGYHSCDDVFKCNMCGEKCDGPVGLFVHMARNAHS.

Disordered regions lie at residues 30–51 and 171–213; these read EPGHHLDGNSVASSPRQSPIPS and EKLQ…EDMK. Over residues 39–51 the composition is skewed to polar residues; the sequence is SVASSPRQSPIPS. The span at 197-213 shows a compositional bias: basic and acidic residues; the sequence is EPEKEHDQMSNSSEDMK. C2H2-type zinc fingers lie at residues 239 to 261, 268 to 290, 296 to 318, and 324 to 348; these read YKCKTCGVVAITKVDFWAHTRTH, LQCPKCPFVTEFKHHLEYHIRKH, FQCDKCSYTCVNKSMLNSHRKSH, and YRCADCDYATKYCHSFKLHLRKYGH. 3 disordered regions span residues 367–416, 511–535, and 602–694; these read DVYG…VATS, EQLQQQNQQQSDNEEEDQDDEYERK, and MTSP…APPS. Low complexity-rich tracts occupy residues 397-414 and 512-521; these read VAAVAPQQQQSQPAQPVA and QLQQQNQQQS. The span at 522–531 shows a compositional bias: acidic residues; that stretch reads DNEEEDQDDE. A compositionally biased stretch (low complexity) spans 651-694; that stretch reads ANTSASSTASSSGNSSNASSNSNGNSSSNSSSNGTTSAVAAPPS. 2 C2H2-type zinc fingers span residues 704-726 and 732-756; these read YECKYCDIFFKDAVLYTIHMGYH and FKCNMCGEKCDGPVGLFVHMARNAH.

This sequence belongs to the hunchback C2H2-type zinc-finger protein family.

The protein resides in the nucleus. Functionally, gap class segmentation protein that controls development of head structures. This chain is Protein hunchback (hb), found in Drosophila sechellia (Fruit fly).